A 421-amino-acid chain; its full sequence is ATP-dependent RNA helicase RhlB (421 aa).

The short motif at 9–37 (QKFSDFALHPKVVEALEKKGFHNCTPIQA) is the Q motif element. A Helicase ATP-binding domain is found at 40–219 (LPLTLAGRDV…FEQMNNAEYI (180 aa)). 53-60 (AQTGTGKT) serves as a coordination point for ATP. The DEAD box motif lies at 165–168 (DEAD). The 146-residue stretch at 245 to 390 (RLLQTLIEEE…VSKYNPDALM (146 aa)) folds into the Helicase C-terminal domain. Residues 392–421 (DLPKPLRLTRPRTGNGPRRTGAPRNRRRSG) are disordered. The span at 402–414 (PRTGNGPRRTGAP) shows a compositional bias: low complexity.

This sequence belongs to the DEAD box helicase family. RhlB subfamily. In terms of assembly, component of the RNA degradosome, which is a multiprotein complex involved in RNA processing and mRNA degradation.

The protein resides in the cytoplasm. It carries out the reaction ATP + H2O = ADP + phosphate + H(+). Functionally, DEAD-box RNA helicase involved in RNA degradation. Has RNA-dependent ATPase activity and unwinds double-stranded RNA. The protein is ATP-dependent RNA helicase RhlB of Escherichia fergusonii (strain ATCC 35469 / DSM 13698 / CCUG 18766 / IAM 14443 / JCM 21226 / LMG 7866 / NBRC 102419 / NCTC 12128 / CDC 0568-73).